Reading from the N-terminus, the 187-residue chain is MTKEPIYSPRMLHRDPDSPRPVLPTQLTSSTLRCSQFQTNVFCLRERDLLERFTSEVAQLQGRGESREFSFLLSHQLAEDLGKAFTEKAMLQTILDAEAKLPTGSVKDVLGLVRSMYALISLEEDPSLLRYGYLSQDNVGDVRREVSKLCGELRPHALALVTSFGIPDSFLSPIAFNWVEANTWSSV.

The disordered stretch occupies residues 1 to 21; it reads MTKEPIYSPRMLHRDPDSPRP.

It belongs to the acyl-CoA oxidase family.

It catalyses the reaction a 2,3-saturated acyl-CoA + O2 = a (2E)-enoyl-CoA + H2O2. The polypeptide is Putative acyl-coenzyme A oxidase At3g06690 (Arabidopsis thaliana (Mouse-ear cress)).